A 204-amino-acid polypeptide reads, in one-letter code: MIARLRGTLLEKRPPTLVVEANGLGYEVEAPLSTIEALPETGREVILHTHLSVREDGQTLFGFRTRAERDLFRRLIRVSGVGPKLGLALLSGVDGEELVRCVRDDDPKRLTQVPGIGRKTAERLIVELRDRLDGVGGGSTAAPAAGADHPTGENDPVSEAIEGLVALGYKPPEAARMARNAAEPELGCEAIIRRALQRAVPRGG.

The segment at 1 to 64 (MIARLRGTLL…EDGQTLFGFR (64 aa)) is domain I. The domain II stretch occupies residues 65–143 (TRAERDLFRR…GVGGGSTAAP (79 aa)). Residues 144–153 (AAGADHPTGE) are flexible linker. Residues 153 to 204 (ENDPVSEAIEGLVALGYKPPEAARMARNAAEPELGCEAIIRRALQRAVPRGG) form a domain III region.

Belongs to the RuvA family. As to quaternary structure, homotetramer. Forms an RuvA(8)-RuvB(12)-Holliday junction (HJ) complex. HJ DNA is sandwiched between 2 RuvA tetramers; dsDNA enters through RuvA and exits via RuvB. An RuvB hexamer assembles on each DNA strand where it exits the tetramer. Each RuvB hexamer is contacted by two RuvA subunits (via domain III) on 2 adjacent RuvB subunits; this complex drives branch migration. In the full resolvosome a probable DNA-RuvA(4)-RuvB(12)-RuvC(2) complex forms which resolves the HJ.

It localises to the cytoplasm. The RuvA-RuvB-RuvC complex processes Holliday junction (HJ) DNA during genetic recombination and DNA repair, while the RuvA-RuvB complex plays an important role in the rescue of blocked DNA replication forks via replication fork reversal (RFR). RuvA specifically binds to HJ cruciform DNA, conferring on it an open structure. The RuvB hexamer acts as an ATP-dependent pump, pulling dsDNA into and through the RuvAB complex. HJ branch migration allows RuvC to scan DNA until it finds its consensus sequence, where it cleaves and resolves the cruciform DNA. This Halorhodospira halophila (strain DSM 244 / SL1) (Ectothiorhodospira halophila (strain DSM 244 / SL1)) protein is Holliday junction branch migration complex subunit RuvA.